Here is a 524-residue protein sequence, read N- to C-terminus: Ribonuclease Y (524 aa).

A helical transmembrane segment spans residues 3–23; it reads IVINLFLLVPASIVFFAAGFF. Residues 96-127 form a disordered region; it reads QQREGQLKKQAQDNRDMERRLQDQRKENEQVQ. The span at 100-124 shows a compositional bias: basic and acidic residues; that stretch reads GQLKKQAQDNRDMERRLQDQRKENE. Residues 214–280 form the KH domain; sequence ALSVVHIQTD…KLTLQKLLSE (67 aa). The region spanning 340 to 432 is the HD domain; it reads LLQHSREVAM…VDAANVISLS (93 aa).

Belongs to the RNase Y family.

The protein localises to the cell membrane. In terms of biological role, endoribonuclease that initiates mRNA decay. In Chlorobium phaeovibrioides (strain DSM 265 / 1930) (Prosthecochloris vibrioformis (strain DSM 265)), this protein is Ribonuclease Y.